The sequence spans 384 residues: Urea transporter 1 (384 aa).

Transmembrane regions (helical) follow at residues 61–81, 85–105, 111–131, 138–158, and 168–188; these read ISQV…AGLL, PWWA…ALLL, AIAA…MAVF, FWWL…FSSA, and LPVF…ATGH. The N-linked (GlcNAc...) asparagine glycan is linked to N206. 4 helical membrane-spanning segments follow: residues 250-270, 279-299, 305-325, and 327-347; these read LMCL…LSLA, GLWG…FMAL, LLAL…THLM, and AVHL…FLLL.

The protein belongs to the urea transporter family. As to quaternary structure, homotrimer; each subunit contains a pore through which urea permeates. Identified in a complex with STOM. In terms of tissue distribution, expressed in brain, spleen, kidney, testis and lung, with highest levels in brain.

The protein resides in the cell membrane. It localises to the basolateral cell membrane. The enzyme catalyses urea(in) = urea(out). Its function is as follows. Mediates the transport of urea driven by a concentration gradient across the cell membrane. Mediates the transport of urea across the cell membranes of erythrocytes and the renal inner medullary collecting duct which is critical to the urinary concentrating mechanism. Facilitates water transport in erythrocytes. This chain is Urea transporter 1 (Slc14a1), found in Rattus norvegicus (Rat).